The sequence spans 225 residues: ATP-dependent dethiobiotin synthetase BioD 1 (225 aa).

ATP is bound at residue 13-18 (EVGKTV). T17 is a Mg(2+) binding site. The active site involves K38. Residue S42 participates in substrate binding. ATP is bound by residues D55, 116 to 119 (EGAG), 176 to 177 (ND), 205 to 207 (PWL), and E212. Positions 55 and 116 each coordinate Mg(2+).

Belongs to the dethiobiotin synthetase family. As to quaternary structure, homodimer. Requires Mg(2+) as cofactor.

Its subcellular location is the cytoplasm. It carries out the reaction (7R,8S)-7,8-diammoniononanoate + CO2 + ATP = (4R,5S)-dethiobiotin + ADP + phosphate + 3 H(+). It participates in cofactor biosynthesis; biotin biosynthesis; biotin from 7,8-diaminononanoate: step 1/2. Functionally, catalyzes a mechanistically unusual reaction, the ATP-dependent insertion of CO2 between the N7 and N8 nitrogen atoms of 7,8-diaminopelargonic acid (DAPA, also called 7,8-diammoniononanoate) to form a ureido ring. The sequence is that of ATP-dependent dethiobiotin synthetase BioD 1 from Escherichia coli O157:H7.